A 388-amino-acid polypeptide reads, in one-letter code: Chorismate synthase (388 aa).

Arg-39 and Arg-45 together coordinate NADP(+). Residues 130–132 (RSS), 251–252 (NA), Gly-296, 311–315 (KPIPT), and Arg-337 each bind FMN.

This sequence belongs to the chorismate synthase family. Homotetramer. The cofactor is FMNH2.

It catalyses the reaction 5-O-(1-carboxyvinyl)-3-phosphoshikimate = chorismate + phosphate. It functions in the pathway metabolic intermediate biosynthesis; chorismate biosynthesis; chorismate from D-erythrose 4-phosphate and phosphoenolpyruvate: step 7/7. Its function is as follows. Catalyzes the anti-1,4-elimination of the C-3 phosphate and the C-6 proR hydrogen from 5-enolpyruvylshikimate-3-phosphate (EPSP) to yield chorismate, which is the branch point compound that serves as the starting substrate for the three terminal pathways of aromatic amino acid biosynthesis. This reaction introduces a second double bond into the aromatic ring system. This chain is Chorismate synthase, found in Streptococcus pyogenes serotype M6 (strain ATCC BAA-946 / MGAS10394).